The primary structure comprises 505 residues: Flagellin (505 aa).

It belongs to the bacterial flagellin family.

The protein resides in the secreted. The protein localises to the bacterial flagellum. In terms of biological role, flagellin is the subunit protein which polymerizes to form the filaments of bacterial flagella. The protein is Flagellin (fliC) of Salmonella montevideo.